An 86-amino-acid polypeptide reads, in one-letter code: U15-lycotoxin-Ls1d (86 aa).

A signal peptide spans 1–20 (MNSKIFAVLFLLAFLSCVLS). In terms of domain architecture, WAP spans 21–66 (DQYCPKSSITACKKMNIRNDCCKDDDCTGGSWCCATPCGNFCKYPT). Cystine bridges form between Cys-24–Cys-54, Cys-32–Cys-58, Cys-41–Cys-53, Cys-42–Cys-80, and Cys-47–Cys-62.

The protein belongs to the venom protein 11 family. 01 (wap-1) subfamily. Contains 5 disulfide bonds. In terms of tissue distribution, expressed by the venom gland.

The protein resides in the secreted. In terms of biological role, has antibacterial activity. This is U15-lycotoxin-Ls1d from Lycosa singoriensis (Wolf spider).